Reading from the N-terminus, the 298-residue chain is Ethanolamine ammonia-lyase small subunit (298 aa).

The targets protein to the BMC stretch occupies residues 1–19 (MDQKQIEEIVRSVMASMGQ). Adenosylcob(III)alamin is bound by residues Val210, Glu231, and Cys261.

This sequence belongs to the EutC family. In terms of assembly, the basic unit is a heterodimer which dimerizes to form tetramers. The heterotetramers trimerize; 6 large subunits form a core ring with 6 small subunits projecting outwards. Interacts with EutS, which targets it to the interior of the BMC. The cofactor is adenosylcob(III)alamin.

It is found in the bacterial microcompartment. The catalysed reaction is ethanolamine = acetaldehyde + NH4(+). The protein operates within amine and polyamine degradation; ethanolamine degradation. In terms of biological role, catalyzes the deamination of various vicinal amino-alcohols to oxo compounds. It is spontaneously inactivated by its substrate and reactivated by EutA. May play a role in bacterial microcompartment (BMC) assembly or maintenance. Directly targeted to the BMC. Expression of the eut operon allows this bacteria to use ethanolamine (EA) as a carbon, nitrogen and energy source. It relies on cobalamin (vitamin B12) both as a cofactor for the ethanolamine ammonia-lyase activity and to induce the operon. EA enhances bacterial survival in macrophages in a concentration-dependent manner, suggesting it is an important nutrient during infection. The protein is Ethanolamine ammonia-lyase small subunit of Salmonella typhimurium (strain LT2 / SGSC1412 / ATCC 700720).